The sequence spans 269 residues: 4-hydroxy-tetrahydrodipicolinate reductase (269 aa).

Residues 8–13 (GAAGRM) and Glu34 contribute to the NAD(+) site. Arg35 contributes to the NADP(+) binding site. Residues 98–100 (GTT) and 122–125 (APNY) contribute to the NAD(+) site. His155 serves as the catalytic Proton donor/acceptor. His156 serves as a coordination point for (S)-2,3,4,5-tetrahydrodipicolinate. The Proton donor role is filled by Lys159. 165-166 (GT) lines the (S)-2,3,4,5-tetrahydrodipicolinate pocket.

It belongs to the DapB family.

The protein resides in the cytoplasm. The catalysed reaction is (S)-2,3,4,5-tetrahydrodipicolinate + NAD(+) + H2O = (2S,4S)-4-hydroxy-2,3,4,5-tetrahydrodipicolinate + NADH + H(+). The enzyme catalyses (S)-2,3,4,5-tetrahydrodipicolinate + NADP(+) + H2O = (2S,4S)-4-hydroxy-2,3,4,5-tetrahydrodipicolinate + NADPH + H(+). The protein operates within amino-acid biosynthesis; L-lysine biosynthesis via DAP pathway; (S)-tetrahydrodipicolinate from L-aspartate: step 4/4. Functionally, catalyzes the conversion of 4-hydroxy-tetrahydrodipicolinate (HTPA) to tetrahydrodipicolinate. This chain is 4-hydroxy-tetrahydrodipicolinate reductase, found in Vibrio parahaemolyticus serotype O3:K6 (strain RIMD 2210633).